A 431-amino-acid polypeptide reads, in one-letter code: uncharacterized protein (431 aa).

The 258-residue stretch at 1-258 (MPSQMREAIT…HGLIDLERAG (258 aa)) folds into the Peptidase S8 domain.

It belongs to the peptidase S8 family.

This is an uncharacterized protein from Sinorhizobium fredii (strain NBRC 101917 / NGR234).